The primary structure comprises 586 residues: Asparagine synthetase [glutamine-hydrolyzing] (586 aa).

The active-site For GATase activity is C2. The Glutamine amidotransferase type-2 domain occupies 2–185 (CGILAVLGCS…PGHLYSSKSG (184 aa)). Residues 50 to 54 (RLAII), 75 to 77 (NGE), and D98 each bind L-glutamine. The region spanning 194-517 (PPWFNESVPS…PQNSARLTVP (324 aa)) is the Asparagine synthetase domain. Residues L232, V268, and 342 to 343 (SG) contribute to the ATP site.

Belongs to the asparagine synthetase family.

The enzyme catalyses L-aspartate + L-glutamine + ATP + H2O = L-asparagine + L-glutamate + AMP + diphosphate + H(+). It functions in the pathway amino-acid biosynthesis; L-asparagine biosynthesis; L-asparagine from L-aspartate (L-Gln route): step 1/1. This is Asparagine synthetase [glutamine-hydrolyzing] from Brassica oleracea (Wild cabbage).